Here is a 315-residue protein sequence, read N- to C-terminus: tRNA pseudouridine synthase B (315 aa).

Asp47 (nucleophile) is an active-site residue.

It belongs to the pseudouridine synthase TruB family. Type 1 subfamily.

The enzyme catalyses uridine(55) in tRNA = pseudouridine(55) in tRNA. Its function is as follows. Responsible for synthesis of pseudouridine from uracil-55 in the psi GC loop of transfer RNAs. The sequence is that of tRNA pseudouridine synthase B from Shewanella pealeana (strain ATCC 700345 / ANG-SQ1).